We begin with the raw amino-acid sequence, 1869 residues long: Chitin synthase csm1 (1869 aa).

The Myosin motor domain maps to methionine 1 to aspartate 778. Glycine 103–threonine 110 is a binding site for ATP. N-linked (GlcNAc...) asparagine glycosylation is found at asparagine 122, asparagine 290, asparagine 427, and asparagine 558. The tract at residues histidine 579–glutamine 653 is disordered. Residues arginine 583 to serine 593 are compositionally biased toward polar residues. Residues leucine 658–aspartate 682 are actin-binding. The N-linked (GlcNAc...) asparagine glycan is linked to asparagine 660. 2 consecutive transmembrane segments (helical) span residues tryptophan 880–glycine 900 and phenylalanine 919–valine 939. Asparagine 1029, asparagine 1054, and asparagine 1120 each carry an N-linked (GlcNAc...) asparagine glycan. Residues phenylalanine 1191–leucine 1211 traverse the membrane as a helical segment. N-linked (GlcNAc...) asparagine glycosylation is found at asparagine 1448 and asparagine 1554. 3 consecutive transmembrane segments (helical) span residues phenylalanine 1579–valine 1599, valine 1612–isoleucine 1632, and methionine 1639–leucine 1659. In terms of domain architecture, DEK-C spans leucine 1811–serine 1866.

In the N-terminal section; belongs to the TRAFAC class myosin-kinesin ATPase superfamily. Myosin family. This sequence in the C-terminal section; belongs to the chitin synthase family. Class V subfamily.

The protein localises to the cell membrane. It is found in the cell septum. It localises to the cell tip. It catalyses the reaction [(1-&gt;4)-N-acetyl-beta-D-glucosaminyl](n) + UDP-N-acetyl-alpha-D-glucosamine = [(1-&gt;4)-N-acetyl-beta-D-glucosaminyl](n+1) + UDP + H(+). Functionally, polymerizes chitin, a structural polymer of the cell wall and septum, by transferring the sugar moiety of UDP-GlcNAc to the non-reducing end of the growing chitin polymer. Involved in mycelial growth. The chain is Chitin synthase csm1 from Pyricularia grisea (Crabgrass-specific blast fungus).